Consider the following 5900-residue polypeptide: MYKFKFNIFKAIKALELELTKIKNESSSSTIIQDFKSFEQIFKKKENEFTSQDKLFIVEEISNLLMSKPEYPSLISNIFSPLLVDLVSRYIQNGKKEERWLGLVQSCFRLLSFNKSLFSSLWDWTPLFSLLEIKSQRITWYVIKSMSMVLNVPDHQITQIKPLFKQYHNQIIQIESELLNLESSKLFLNNNNNNNNKKENINNNQEEEKEDEELINKYPNIFIQKQDLHKSIVDVCGILLFKKFEQIGHGSSVKSKKGGEQQQEGEGEDEQVQKLVYTNTVSQNLNSLAIAVGLGKPILIEGVTGSGKTTMIEELSRITGNDNIIRIHLGDQTDSKVLLGTYITSDTPGEFKWQAGALTQAVQEGRWILIEDIDLAPIEVLSVLIPLLENRTLFIPGRGEVIEASNGFQLFATQTLFGSHSRDQNANILSHLWTRVVIEALSPTEMKQVLLTLFPQLTVMISKFIETFNLLLRVISNQSISISPTDEVAGIANIANTANVNNINNNNNTDNNNNNNSNEKFIIPSSRFISSRDLIKWIRRCNQRLHLTNVSQQIITSTMQEIVFVEALDCFCSMISKKNLRKQLTQVIGRVWELTGDRINYYVELYKPSIIITQESVSTGRAKLKSLEKSDSIQISNGKKHTRFTTEQSQQDSGVTKHGNVFAHTMNSLRLMEKISISIQFNEPILLVGETGTGKTSVVQYIADQLNQKLVVLNLNQQSDSSDLIGGFKPVEMRLLCLPLKNRFDSMFKKTFSESNNTDFLEKIDKAFISKNWKQFIALLNKAIKLVENKVLKDDQTTTNNTKENNNNNNNNNNNNNNNNNNKKRTIRSEVKEKWIKLSNDIKKLTIQFEKSKNNFAFSFVEGSLVNCIRKGYWVLLDEMNLATSETLESLSGLFDGGSITLTEKGEVEPVERHPNFKVFACMNPPTDIGKKDLPPGIRNRFTEYYVDDLDNRGDLCLVVKTVLSNLVPNPPIEDIVEFYLKTKQDAQNKMLDGSNQKPIFSLRTLSRALNYTKHVTKSFGFQRALFEGISMSFLTQLNKSSYPMMEQLIKQYIKKGEVKLYNQPLNRPPPTSTTNNNNNNAEESYVKIEQFWIECGNEKPIIPTHYILTPSIKSNLSNIARVLVSRKHPILLQGPTSSGKTSMVEYLAIRTGHRFIRINNHEHTDLQEYLGQYISDDKGKLVFQEGILVEAVRKGYWVVLDELNLAPSEVLEALNRLLDDNRELFIPETQEVVRPHPHFMLFATQNPPGLYGGRKVLSRAFRNRFLELHVDDIPEDELEEILCKRCALPPSYCKKLVLIMKELQLNRQGSNQVFAGKHGAITFRDLFRWAERQPSSYEELGIAGYQLLAERLRKDEEKLIIKQVIEKHLKIKLDIESIYSCDDKPEFLKLLQLLSENDSELSKSNHLEKIVWTRSMKRLFSLVGKCLEHKEPILLVGETGCSKTTICQLYSILNKQKLHILNCHQHTETADFIGGLRPVRGRDQVLSKLYSLVKQYFNQLSQLNLYKLEQENNNIDELPIKEIMERLIVESWKQVSNSSLLTEQLKQLAIEIDKTYSSYCSLFNWVDGPLVEAMKQGDYFLIDEISLAEDAVLERLNSVLEPSRLLVLAEKGGVEIEELRGHKEFRILATMNPGGDFGKKELSPAMRNRFTEIWVPAISSHQDLLQIIEERFTSPQLKGKGSLMLNFIEYLLMIQKNKRVISLRDILSWISFMNLCMDKQLLSPNESYIHGACLVLLDGFGMGSNSSSESEGLKLREACLIRLIDQIESQDEKLKLQTELLSTSSSSSSLSSSIANIIKEENRFGIHPFYIPVRESNVPKIQFSLSAPTTSKNAQRVLRGMQLPRAILVEGSPGVGKTSLITAIANASGNQIVRINLSEQTDIMDLLGSDLPVEGGTGGQFEWRDGVFLEALRNGSWVLLDELNLASQTVLEGLNSCLDHRSEVYIPELGKTFACHPNFRVFACQNPLHQGGGRKGLPKSFLNRFTQVFIDQLNQQDLLFISTAMYPTIPSKTIERMIEFNHQMFKESMIEHKFARKGAPWEFNLRDTFRWCDLIVKDPTSISNPARFIDLIYLQRMRTLQDREHVLTIFKRVFTTSGDENDQSIDMMPTICNYDKQPHYSISPEYLQIGSSILPRVQNGGASSFDSSVLDNSSNIQLLQRLLNPLENIMKCIEMNWMSILIGPTSTSKTSSIRLLAQLTGNTLYEFSMNSSVDTTEILGGFEQIDLVRYQKRIISSVSSLITIVSSHIMTYFNSNDDNLMKTCISSIQDIHQVWNLFKKQTQQTQQQIQQDGATIGSGGVGLITIEQLDLLSTIVDALEKLSIQFNLDNNQEHLNRIQDVRQQIQRIKSIEKESVTGCFEWIDGLLIKALETGAWILIDNVNFCNPTVLDRLNPLLEQDGVLMLNERGMVDGQVKVVKPHPNFRIFLTMDDKKGEISRAMRNRGIEIYMAADQLSLMETPSNNFDNQQLLTALGIPLESLTRTMIDFHNQIFTQLSSTIENPCTLSQLLYWGKLILDQLQRGFSLLNSIRNSMEQIYIRPRRHLTQRQLVTNIFNSIFNESAIKSILCEDQTVLGIYPHFIKGKDYVTDSISTTMKMNYQFFEYYLKRLMNSLSSSSSSSSQQQQQDESNYKISAKFLIENINSSQYENYVLYLNSLKDQNEKDSPINQLLTTLISCMKQLFNHTCYKDFEKRLEQLLSMINLSFIDSKQLLIYQGHQWKNNDSLFLLIKEKVDNYITKEAGGSESMIPIKDLFNQVLLNDMEIIKSLLSLFIQSSKQEKEYNKFLKQVQQGNASQQLSVKSIKSIPVILLSLAYTKKMMSKDLLPHQDIISMIYRLFKSLDEQIDQWLIQLSSSEQQQSTFSTIQIINQLILLKNNFWNSTFNLPSNQFNLGEFIIRWRWIYKEINKLTTLTSKSESPLLINTGLQVLIDKISSGLNQYNNDNSNNRLWKVGGYPMVMKSNHLVQLDSQFLSILEKVQYNFNKNESPIKHSSYAIDEDWKKTLIEAISTLYWANYQLNSDNQNQEQQQQELDRVSEFLTNLELVPQTLSDKLKQLIEKQKQFELNSTFNPVSTNFDNSDISNDSMISDATSIHFDPLSIKHQVISISPLIDHSLHLKETFVISELVKLLMLQHMDIENGKMNQSIITIFESIIDELKYIVNKYKSSTIPRSLYHLAFYQKLIWMIDNYLEKVTTNQEKDEQGQEQEQASIGIIELQSVIHSILYVYNSSQWNNAFNDISHVGKYSLPQYKYRLSKNDAAASLDNGSSKVNIYDSIRFGYGPPRLFQNIQTVFSFYLTCDWEYVSIADVPVKIEQLNQIIQHLTSADGSSNVSNIESFEYQIKQTIALLLSTITSFYKSFNNDEHKKHQLLSNVALIGEHLLSSSSSLEILDIGFDELIENIKELIIQSNDKSFNEKSKQLLLPCLDILLCLDDKVLYKDELKLQSTFGRLQLLLNTFRLIMFVPSGSIDPTQKYDVILQYSKEHSKQLQDEIEIRTIIEKQYTGKDGTSLVIDELVQKKQSIDQKLALDSKKITLRPIPSQFEELYRDVSQFSNHFSNIEKIIDLISKLDLSQVKNEFNLEVESEGGDNQQQQENNTSANSSYNQMILSTEQMWQEKANHFIQSCEKKFYSRYRDIIVPIITAVYQMKSGLRMMSVSFKQKVQDNKLGGNQGITKQIQKVLLSLTQFPRINSVDINSKITTTSTTTTATTTTNTTSNNILLDKLTLDSIKDMMKFNQRTNQDNCNGGLQNFKVIGLLLRSSLCQIYSQLSNSNYLDVDNLEAIDSIFRIFVQEWRFQEEEKRKKEELENQEFKYKVQTHKMETKEEKDEKVFLTSFPNFYKDFEDLEVANVVENQIDDDNDEENKDKENNESNVLTSEDGSMFFKSSINNEEILQLCSIHRDIFKHLDGIPIPKEQQQWTLSDRDRSELFQLFYSSSYLLMKILNQRSGDMEFDQLSLGSHILSASNLKETLSIRPPSLITYSKLDEKFRFLKTSSYLYKKSKGINDDDGDNQVVDVIHQKKTYNIYRDSNISEIGIIREPLISFRKRVFELLVEYPEQANLTLMVKLIDRLMTYPATDPLAKILTGLELLLRKSLEWESFASKAVSIQNHLNEISSLIVRWRKLEIESWPSIFQSQEKEAEVKALKSWFILYDLINDEPSSPELEDENLSKNFHTLQQYLYSSSLGDFLTRIELLKSFYKQLNSTIKLIGTSKNTNYKQKLSDIIYNIFKYFENFISRFEDRLAKSIKPIEDKALEFIRLSRWDDNRLLTQYERLKQHIEVSHRNLAKVTIKYKNVLAQPLHDIFTQIENELDIPPLVLHSGAATILEDKLKKNQKLNKKQIQKKSLAIENFNDWLSFSPSNYSIDRKSIDSISKPIEIESPLLKKLFQIENEKLAQNKLSLLSKRMIQICKENLLESDSWKVVRDGVDIINDLSIEIIDRLKELSSDEKIKRQEKEFALKELMSKFHEMGLSYHINRYPQEQLQISYLFNVRHLPTISDNQGYLPTSFSKITADNGAKLLDQADQYYYRIVSRVHRLRQLSIEYNSDLSSKHVQRINGYVEHFLSIIINQRNNLIDSINSWNHLTLFTELFTNISGSGGSNSEIDEQIFNNHNMLSKWFEIQRESINQFNQAIKEILLLCRKTTSAVSGGMISTIIPEICSIQIIIESIKSEIDKHQSKLRNLFSFLNNQYPMMTWSTINLIISIFTKFKEIKEKLNQLLLSKLSNINYIKSPIQILINNIDSLINKFNSEYEELVGNEINDNDIENQNNIKEFTNQFGILIDQILISIQDLKIQSNQIIAYNKEQEELDQELEKVREYTIEDGSISKLSEFIDHQVQSLRLSKLLEQFVKLHNIIVDGGGSVSTLSIYRQMIKQMGPLLAQFMLIVNQSIVDSLSYHKTCCKLEYISTGVFIQLYSKGFCKPADGGDDGEGGEGGRSNFEDDVEGTGMGEGKGKKDVSDQLEDQGQIEDTNTQKKEEKDEDEDEEKEEKDEDEGFDMQDDFEGEMHDIKKDENKDEDKKDDPNNEKENDKEMGDLEKPEDNVVDEKLWDEQDVQDEEEQDEEGKGDETNSEEMMAKQDGKDDNDDDKKDDDKKDDKKKKKEENGKPDENEEGEEGKDDEEEDGKDDNKNADDGASDEDDFGQEENEDDVINQEQEKEENHGDPRGDDQMEIPEDLELEDPDEGKEDDEQQDGGDDFKDPLDEMDGDDVSKEEEKKKELDGDEKEESDQDGDEEKEDEEKEDGDEDEDKEDKENQPIDPSNVDSINPEGDEPEKEQPEEDQTSLTTNEQQDETPKDSEQPLGVKDKTGSKSNVSNTDEEMKDESNQDNADDDSGMTQPTPSENDTGALKNLKSQPPPQSSAQQPPKKQKQVDPNPYRSMGDANKEWKKRLNLKQEQEEEEEEQSSEPKEKAPKQDPNAKENENQDYEFIKDDEKLDKDEETDQALAAATDTQLQDIPQNKAQDDQAEQEEDQMDIDEEDDMDVDHKQEVEHQDDSKQQLDENKKISMSKLKQDQLKQQKEKEKEKLEKDQQDGQDDELDGLNQKEQFTKEQLENLTNLDKEKAVLDDGDDQEMEQDGDQDDEESVEEKKLTREDLDRMRQELEQYKIENSSNPEIGTELWKKYEQLTNDLSQDLCEQLRLILEPTLATKLQGDYKSGKRINMKKVIPYIASQFKKDKIWLRRTKPNKRQYQVLLAIDDTESMAAYHSGGFALEAMTMISRAMSRLEVGQLGIVRFGEDVQLVHSFDQVFSDQTGPEIITQFKFQQTKTNMVNFLSKTLQIMDMNKQSSSGEPAMQLVFIVSDGWSLRDPETTKKYLREASIKNVFIVFIVIDNPVNNNSILDFESISFNNGKIQRTNYMSEFPFMYYVILRSLNNIPSILSDTLRQWFDLTKSTQ.

The segment at 250–270 (GSSVKSKKGGEQQQEGEGEDE) is disordered. 6 AAA-ATPase protomer regions span residues 278 to 583 (TNTV…LRKQ), 673 to 1012 (EKIS…ALNY), 1101 to 1346 (PIIP…IAGY), 1411 to 1721 (IVWT…MDKQ), 1840 to 2089 (RGMQ…HVLT), and 2167 to 2451 (LENI…EIYM). ATP contacts are provided by residues 302–309 (GVTGSGKT) and 689–696 (GETGTGKT). Residues 796-826 (QTTTNNTKENNNNNNNNNNNNNNNNNNKKRT) are disordered. The segment covering 797–821 (TTTNNTKENNNNNNNNNNNNNNNNN) has biased composition (low complexity). ATP is bound by residues 1135-1142 (GPTSSGKT), 1438-1445 (GETGCSKT), 1852-1859 (GSPGVGKT), and 2184-2191 (GPTSTSKT). The interval 2562–4965 (ESAIKSILCE…EGKGKKDVSD (2404 aa)) is linker. The segment at 4932-5598 (GDDGEGGEGG…SVEEKKLTRE (667 aa)) is disordered. Over residues 4984–5008 (KDEDEDEEKEEKDEDEGFDMQDDFE) the composition is skewed to acidic residues. Positions 5009–5055 (GEMHDIKKDENKDEDKKDDPNNEKENDKEMGDLEKPEDNVVDEKLWD) are enriched in basic and acidic residues. Over residues 5056 to 5076 (EQDVQDEEEQDEEGKGDETNS) the composition is skewed to acidic residues. Residues 5079–5113 (MMAKQDGKDDNDDDKKDDDKKDDKKKKKEENGKPD) show a composition bias toward basic and acidic residues. Acidic residues-rich tracts occupy residues 5114-5130 (ENEE…EDGK) and 5139-5156 (GASD…DDVI). Positions 5159–5173 (EQEKEENHGDPRGDD) are enriched in basic and acidic residues. The segment covering 5174–5199 (QMEIPEDLELEDPDEGKEDDEQQDGG) has biased composition (acidic residues). Residues 5213–5224 (DVSKEEEKKKEL) are compositionally biased toward basic and acidic residues. 2 stretches are compositionally biased toward acidic residues: residues 5225 to 5255 (DGDE…EDKE) and 5273 to 5286 (EGDE…EEDQ). Residues 5297–5313 (ETPKDSEQPLGVKDKTG) show a composition bias toward basic and acidic residues. Over residues 5339-5349 (GMTQPTPSEND) the composition is skewed to polar residues. Residues 5410-5442 (SEPKEKAPKQDPNAKENENQDYEFIKDDEKLDK) are compositionally biased toward basic and acidic residues. Residues 5448 to 5460 (QALAAATDTQLQD) are compositionally biased toward low complexity. Positions 5469–5487 (DQAEQEEDQMDIDEEDDMD) are enriched in acidic residues. Composition is skewed to basic and acidic residues over residues 5488–5536 (VDHK…KDQQ) and 5551–5570 (QFTK…KAVL). Over residues 5571–5590 (DDGDDQEMEQDGDQDDEESV) the composition is skewed to acidic residues. A VWFA domain is found at 5696 to 5889 (QVLLAIDDTE…NIPSILSDTL (194 aa)).

This sequence belongs to the midasin family. As to quaternary structure, associates with pre-60S ribosomes in the nucleoplasm.

Its subcellular location is the nucleus. The protein resides in the nucleolus. The protein localises to the nucleoplasm. In terms of biological role, nuclear chaperone required for maturation and nuclear export of pre-60S ribosome subunits. Functions at successive maturation steps to remove ribosomal factors at critical transition points, first driving the exit of early pre-60S particles from the nucleolus and then driving late pre-60S particles from the nucleus. This is Midasin (mdn1) from Dictyostelium discoideum (Social amoeba).